Consider the following 179-residue polypeptide: Large ribosomal subunit protein uL5 (179 aa).

It belongs to the universal ribosomal protein uL5 family. In terms of assembly, part of the 50S ribosomal subunit; part of the 5S rRNA/L5/L18/L25 subcomplex. Contacts the 5S rRNA and the P site tRNA. Forms a bridge to the 30S subunit in the 70S ribosome.

In terms of biological role, this is one of the proteins that bind and probably mediate the attachment of the 5S RNA into the large ribosomal subunit, where it forms part of the central protuberance. In the 70S ribosome it contacts protein S13 of the 30S subunit (bridge B1b), connecting the 2 subunits; this bridge is implicated in subunit movement. Contacts the P site tRNA; the 5S rRNA and some of its associated proteins might help stabilize positioning of ribosome-bound tRNAs. This is Large ribosomal subunit protein uL5 from Prochlorococcus marinus (strain MIT 9303).